We begin with the raw amino-acid sequence, 260 residues long: Arginine esterase (260 aa).

The first 17 residues, 1 to 17, serve as a signal peptide directing secretion; sequence MWFLALCLAMSLGWTGA. Residues 18–24 constitute a propeptide, activation peptide; the sequence is EPHFQPR. The Peptidase S1 domain occupies 25–257; the sequence is IIGGRECLKN…HLMWIKDTMK (233 aa). 5 disulfides stabilise this stretch: cysteine 31/cysteine 172, cysteine 50/cysteine 66, cysteine 151/cysteine 218, cysteine 183/cysteine 197, and cysteine 208/cysteine 233. Residue histidine 65 is the Charge relay system of the active site. Asparagine 79 carries an N-linked (GlcNAc...) asparagine glycan. Aspartate 119 acts as the Charge relay system in catalysis. The active-site Charge relay system is serine 212.

This sequence belongs to the peptidase S1 family. Kallikrein subfamily.

It carries out the reaction Preferential cleavage of Arg-|-Xaa bonds in small molecule substrates. Highly selective action to release kallidin (lysyl-bradykinin) from kininogen involves hydrolysis of Met-|-Xaa or Leu-|-Xaa.. This serine protease is found in dog seminal plasma, its exact physiological function is not known. This Canis lupus familiaris (Dog) protein is Arginine esterase.